We begin with the raw amino-acid sequence, 214 residues long: Histidine biosynthesis bifunctional protein HisIE (214 aa).

Positions 1 to 125 (MPATALSLPL…ESIEPPPADT (125 aa)) are phosphoribosyl-AMP cyclohydrolase. Residues 126–214 (LSQVYNIVCQ…VYEQLQLRRR (89 aa)) are phosphoribosyl-ATP pyrophosphohydrolase.

The protein in the N-terminal section; belongs to the PRA-CH family. This sequence in the C-terminal section; belongs to the PRA-PH family.

It is found in the cytoplasm. The catalysed reaction is 1-(5-phospho-beta-D-ribosyl)-ATP + H2O = 1-(5-phospho-beta-D-ribosyl)-5'-AMP + diphosphate + H(+). The enzyme catalyses 1-(5-phospho-beta-D-ribosyl)-5'-AMP + H2O = 1-(5-phospho-beta-D-ribosyl)-5-[(5-phospho-beta-D-ribosylamino)methylideneamino]imidazole-4-carboxamide. Its pathway is amino-acid biosynthesis; L-histidine biosynthesis; L-histidine from 5-phospho-alpha-D-ribose 1-diphosphate: step 2/9. The protein operates within amino-acid biosynthesis; L-histidine biosynthesis; L-histidine from 5-phospho-alpha-D-ribose 1-diphosphate: step 3/9. The polypeptide is Histidine biosynthesis bifunctional protein HisIE (Thermosynechococcus vestitus (strain NIES-2133 / IAM M-273 / BP-1)).